We begin with the raw amino-acid sequence, 242 residues long: Large ribosomal subunit protein uL1 (242 aa).

The protein belongs to the universal ribosomal protein uL1 family. In terms of assembly, part of the 50S ribosomal subunit.

Binds directly to 23S rRNA. The L1 stalk is quite mobile in the ribosome, and is involved in E site tRNA release. Functionally, protein L1 is also a translational repressor protein, it controls the translation of the L11 operon by binding to its mRNA. The chain is Large ribosomal subunit protein uL1 from Persephonella marina (strain DSM 14350 / EX-H1).